The primary structure comprises 470 residues: AAA-ATPase At5g17730 (470 aa).

The first 18 residues, 1–18 (MFSLRNLPSLAPFVSAYA), serve as a signal peptide directing secretion. 252–259 (GPPGTGKT) is a binding site for ATP.

The protein belongs to the AAA ATPase family. BCS1 subfamily. Mg(2+) is required as a cofactor.

The enzyme catalyses ATP + H2O = ADP + phosphate + H(+). The polypeptide is AAA-ATPase At5g17730 (Arabidopsis thaliana (Mouse-ear cress)).